Consider the following 109-residue polypeptide: Large ribosomal subunit protein uL22 (109 aa).

It belongs to the universal ribosomal protein uL22 family. Part of the 50S ribosomal subunit.

Its function is as follows. This protein binds specifically to 23S rRNA; its binding is stimulated by other ribosomal proteins, e.g. L4, L17, and L20. It is important during the early stages of 50S assembly. It makes multiple contacts with different domains of the 23S rRNA in the assembled 50S subunit and ribosome. In terms of biological role, the globular domain of the protein is located near the polypeptide exit tunnel on the outside of the subunit, while an extended beta-hairpin is found that lines the wall of the exit tunnel in the center of the 70S ribosome. This Cupriavidus metallidurans (strain ATCC 43123 / DSM 2839 / NBRC 102507 / CH34) (Ralstonia metallidurans) protein is Large ribosomal subunit protein uL22.